A 362-amino-acid chain; its full sequence is Vignain (362 aa).

The first 20 residues, 1–20, serve as a signal peptide directing secretion; that stretch reads MAMKKLLWVVLSLSLVLGVA. Residues 21–126 constitute a propeptide, activation peptide; that stretch reads NSFDFHEKDL…SGTFMYEKVG (106 aa). Cystine bridges form between Cys-149/Cys-191, Cys-183/Cys-224, and Cys-282/Cys-334. The active site involves Cys-152. Active-site residues include His-288 and Asn-309. N-linked (GlcNAc...) asparagine glycosylation is found at Asn-326 and Asn-346. Residues 353–362 constitute a propeptide, removed in mature form; the sequence is GSLSSPKDEL. The short motif at 359–362 is the Prevents secretion from ER element; that stretch reads KDEL.

This sequence belongs to the peptidase C1 family. The mature protein is not glycosylated. In terms of processing, the precursor stored in the endoplasmic reticulum lumen is processed during the transport to proteins bodies to two dominant mature forms that differ by a single amino acid residue at the N-terminus.

It is found in the endoplasmic reticulum lumen. It localises to the vacuole. Its subcellular location is the aleurone grain. In terms of biological role, thought to be involved in the hydrolysis of stored seed proteins. In vitro, catalyzes the hydrolysis of proteins, such as azocasein. Shows a preferential cleavage for Asn-|-Xaa in small molecule substrates such as Boc-Asn-|-OPHNO(2). In Vigna mungo (Black gram), this protein is Vignain.